We begin with the raw amino-acid sequence, 545 residues long: Chaperonin GroEL (545 aa).

Residues 30 to 33 (TLGP), lysine 51, 87 to 91 (DGTTT), glycine 415, and aspartate 496 each bind ATP.

This sequence belongs to the chaperonin (HSP60) family. Forms a cylinder of 14 subunits composed of two heptameric rings stacked back-to-back. Interacts with the co-chaperonin GroES.

Its subcellular location is the cytoplasm. The enzyme catalyses ATP + H2O + a folded polypeptide = ADP + phosphate + an unfolded polypeptide.. In terms of biological role, together with its co-chaperonin GroES, plays an essential role in assisting protein folding. The GroEL-GroES system forms a nano-cage that allows encapsulation of the non-native substrate proteins and provides a physical environment optimized to promote and accelerate protein folding. The sequence is that of Chaperonin GroEL from Haemophilus influenzae (strain 86-028NP).